A 218-amino-acid chain; its full sequence is RNA polymerase sigma-H factor (218 aa).

The short motif at 62 to 75 (DIVQEGMIGLYKSI) is the Polymerase core binding element. Residues 182–201 (YQEISDELNRHVKSIDNALQ) constitute a DNA-binding region (H-T-H motif).

This sequence belongs to the sigma-70 factor family. Interacts transiently with the RNAP core.

Its function is as follows. Sigma factors are initiation factors that promote the attachment of RNA polymerase (RNAP) to specific initiation sites and are then released. This sigma factor is involved in the transition to post-exponential phase in the beginning of sporulation. It is also required for transcription of several stationary phase genes. Association with the RNAP core increases rapidly in early exponential phase, and reamins constant expression level after. This is RNA polymerase sigma-H factor (sigH) from Bacillus subtilis (strain 168).